The following is a 260-amino-acid chain: Membrane protein insertase YidC 1 (260 aa).

The N-terminal stretch at 1 to 22 (MLKSYRAVLVSLSLLLVFVLSG) is a signal peptide. Cys-23 carries the N-palmitoyl cysteine lipid modification. Cys-23 carries the S-diacylglycerol cysteine lipid modification. 5 helical membrane-spanning segments follow: residues 29 to 49 (IDAH…SFMI), 52 to 72 (VAHH…TLVI), 133 to 153 (LAGC…YYAI), 164 to 184 (FLWV…IAAL), and 213 to 233 (MPAM…LYWI).

Belongs to the OXA1/ALB3/YidC family. Type 2 subfamily.

Its subcellular location is the cell membrane. Its function is as follows. Required for the insertion and/or proper folding and/or complex formation of integral membrane proteins into the membrane. Involved in integration of membrane proteins that insert both dependently and independently of the Sec translocase complex, as well as at least some lipoproteins. In Bacillus anthracis, this protein is Membrane protein insertase YidC 1.